Reading from the N-terminus, the 527-residue chain is Putative zinc finger CCCH domain-containing protein 64 (527 aa).

Residues 103–127 (GQLRSTQTTSKRKAASRKGQREQRV) form a disordered region. The segment at 213-241 (RPGEPFCRYYMKFGECKHMTFCKYNHPKD) adopts a C3H1-type zinc-finger fold.

The sequence is that of Putative zinc finger CCCH domain-containing protein 64 from Oryza sativa subsp. japonica (Rice).